The sequence spans 327 residues: Biotin synthase (327 aa).

The Radical SAM core domain maps to 48–278 (YCGDGVGLCM…DRHITVCGGR (231 aa)). [4Fe-4S] cluster-binding residues include Cys66, Cys70, and Cys73. 2 residues coordinate [2Fe-2S] cluster: Ser143 and Cys203.

It belongs to the radical SAM superfamily. Biotin synthase family. Homodimer. It depends on [4Fe-4S] cluster as a cofactor. The cofactor is [2Fe-2S] cluster.

The enzyme catalyses (4R,5S)-dethiobiotin + (sulfur carrier)-SH + 2 reduced [2Fe-2S]-[ferredoxin] + 2 S-adenosyl-L-methionine = (sulfur carrier)-H + biotin + 2 5'-deoxyadenosine + 2 L-methionine + 2 oxidized [2Fe-2S]-[ferredoxin]. It participates in cofactor biosynthesis; biotin biosynthesis; biotin from 7,8-diaminononanoate: step 2/2. Functionally, catalyzes the conversion of dethiobiotin (DTB) to biotin by the insertion of a sulfur atom into dethiobiotin via a radical-based mechanism. This chain is Biotin synthase, found in Syntrophotalea carbinolica (strain DSM 2380 / NBRC 103641 / GraBd1) (Pelobacter carbinolicus).